The primary structure comprises 161 residues: Allophycocyanin beta chain (161 aa).

At Asn-71 the chain carries N4-methylasparagine. A (2R,3E)-phycocyanobilin-binding site is contributed by Cys-81.

It belongs to the phycobiliprotein family. As to quaternary structure, heterodimer of an alpha and a beta chain. Contains one covalently linked phycocyanobilin chromophore.

It localises to the plastid. Its subcellular location is the chloroplast thylakoid membrane. Functionally, light-harvesting photosynthetic bile pigment-protein from the phycobiliprotein complex. Allophycocyanin has a maximum absorption at approximately 650 nanometers. The chain is Allophycocyanin beta chain (apcB) from Porphyra purpurea (Red seaweed).